Here is a 248-residue protein sequence, read N- to C-terminus: 2,3-bisphosphoglycerate-dependent phosphoglycerate mutase (248 aa).

Substrate contacts are provided by residues 8 to 15 (RHGESTWN), 21 to 22 (TG), R60, 87 to 90 (ERHY), K98, 114 to 115 (RR), and 183 to 184 (GN). H9 functions as the Tele-phosphohistidine intermediate in the catalytic mechanism. Catalysis depends on E87, which acts as the Proton donor/acceptor.

This sequence belongs to the phosphoglycerate mutase family. BPG-dependent PGAM subfamily. As to quaternary structure, homodimer.

The enzyme catalyses (2R)-2-phosphoglycerate = (2R)-3-phosphoglycerate. It functions in the pathway carbohydrate degradation; glycolysis; pyruvate from D-glyceraldehyde 3-phosphate: step 3/5. In terms of biological role, catalyzes the interconversion of 2-phosphoglycerate and 3-phosphoglycerate. The sequence is that of 2,3-bisphosphoglycerate-dependent phosphoglycerate mutase from Burkholderia ambifaria (strain ATCC BAA-244 / DSM 16087 / CCUG 44356 / LMG 19182 / AMMD) (Burkholderia cepacia (strain AMMD)).